The primary structure comprises 188 residues: Large ribosomal subunit protein eL18 (188 aa).

Lys-119 participates in a covalent cross-link: Glycyl lysine isopeptide (Lys-Gly) (interchain with G-Cter in SUMO2). Ser-130 carries the post-translational modification Phosphoserine. The segment at 150–188 is disordered; it reads RHFGKAPGTPHSHTKPYVRSKGRKFERARGRRASRGYKN. Thr-158 bears the Phosphothreonine mark. Composition is skewed to basic residues over residues 161-171 and 178-188; these read SHTKPYVRSKG and RGRRASRGYKN. Residue Lys-164 forms a Glycyl lysine isopeptide (Lys-Gly) (interchain with G-Cter in SUMO2) linkage.

Belongs to the eukaryotic ribosomal protein eL18 family. As to quaternary structure, component of the large ribosomal subunit.

The protein resides in the cytoplasm. The protein localises to the cytosol. It is found in the rough endoplasmic reticulum. Component of the large ribosomal subunit. The ribosome is a large ribonucleoprotein complex responsible for the synthesis of proteins in the cell. In Bos taurus (Bovine), this protein is Large ribosomal subunit protein eL18 (RPL18).